A 149-amino-acid polypeptide reads, in one-letter code: Alpha-crystallin A chain (149 aa).

In terms of domain architecture, sHSP spans 41–149 (LFRSVLESGI…DPSHSERPIP (109 aa)). His89, Glu91, His96, and His143 together coordinate Zn(2+).

Belongs to the small heat shock protein (HSP20) family. In terms of assembly, heteropolymer composed of three CRYAA and one CRYAB subunits. Inter-subunit bridging via zinc ions enhances stability, which is crucial as there is no protein turn over in the lens. Can also form homodimers and homotetramers (dimers of dimers) which serve as the building blocks of homooligomers. Within homooligomers, the zinc-binding motif is created from residues of 3 different molecules. His-89 and Glu-91 from one molecule are ligands of the zinc ion, and His-96 and His-143 residues from additional molecules complete the site with tetrahedral coordination geometry.

It localises to the cytoplasm. Its subcellular location is the nucleus. Functionally, contributes to the transparency and refractive index of the lens. May act as a chaperone, preventing aggregation of various proteins under a wide range of stress conditions. This is Alpha-crystallin A chain (CRYAA) from Eudromia elegans (Elegant crested-tinamou).